Consider the following 272-residue polypeptide: HMP-PP phosphatase (272 aa).

Asp-8 (nucleophile) is an active-site residue. Positions 8, 10, and 212 each coordinate Mg(2+).

The protein belongs to the HAD-like hydrolase superfamily. Cof family. The cofactor is Mg(2+).

It catalyses the reaction 4-amino-2-methyl-5-(diphosphooxymethyl)pyrimidine + H2O = 4-amino-2-methyl-5-(phosphooxymethyl)pyrimidine + phosphate + H(+). Its function is as follows. Catalyzes the hydrolysis of 4-amino-2-methyl-5-hydroxymethylpyrimidine pyrophosphate (HMP-PP) to 4-amino-2-methyl-5-hydroxymethylpyrimidine phosphate (HMP-P). The sequence is that of HMP-PP phosphatase from Salmonella choleraesuis (strain SC-B67).